A 1036-amino-acid polypeptide reads, in one-letter code: Pre-mRNA-processing factor 39-2 (1036 aa).

Residues 1–24 (MVTTEVRTAVSDKEPLQRSPELDS) are disordered. HAT repeat units lie at residues 62 to 94 (DDIEKLCLVYDAFLLEFPLCHGYWRKYAYHKIK), 96 to 128 (CTLEDAVEVFERAVQAATYSVAVWLDYCAFAVA), 131 to 166 (EDPHDVSRLFERGLSFIGKDYSCCTLWDKYIEYLLG), 168 to 201 (QQWSSLANVYLRTLKYPSKKLDLYYKNFRKIAAS), 278 to 310 (CFETQIRRPYFHVKPLDTNQLDNWHAYLSFGET), and 312 to 344 (GDFDWAINLYERCLIPCANYTEFWFRYVDFVES). Disordered stretches follow at residues 595–618 (GISSIVDSPPKEKKESSLDSYGTQ), 714–767 (PSGS…PVGT), and 995–1036 (KGDE…ISSI). The span at 714 to 726 (PSGSQSPQSYQSQ) shows a compositional bias: low complexity. Basic and acidic residues predominate over residues 740–755 (RDLNQMHRDSKPRSQE). A compositionally biased stretch (polar residues) spans 1002-1036 (SMPQGSTTNSDIQKSQESGAVNEANLSSDTSISSI).

It belongs to the PRP39 family.

Its subcellular location is the nucleus. Involved in pre-mRNA splicing. The polypeptide is Pre-mRNA-processing factor 39-2 (Arabidopsis thaliana (Mouse-ear cress)).